Reading from the N-terminus, the 64-residue chain is Large ribosomal subunit protein bL35 (64 aa).

It belongs to the bacterial ribosomal protein bL35 family.

The sequence is that of Large ribosomal subunit protein bL35 from Vibrio atlanticus (strain LGP32) (Vibrio splendidus (strain Mel32)).